The chain runs to 284 residues: ATP synthase gamma chain (284 aa).

The protein belongs to the ATPase gamma chain family. As to quaternary structure, F-type ATPases have 2 components, CF(1) - the catalytic core - and CF(0) - the membrane proton channel. CF(1) has five subunits: alpha(3), beta(3), gamma(1), delta(1), epsilon(1). CF(0) has three main subunits: a, b and c.

Its subcellular location is the cell membrane. Its function is as follows. Produces ATP from ADP in the presence of a proton gradient across the membrane. The gamma chain is believed to be important in regulating ATPase activity and the flow of protons through the CF(0) complex. This chain is ATP synthase gamma chain, found in Pelotomaculum thermopropionicum (strain DSM 13744 / JCM 10971 / SI).